The sequence spans 241 residues: Ribonuclease 3 (241 aa).

One can recognise an RNase III domain in the interval 16–144; that stretch reads HAEFEKKINY…VIGAIFQDGG (129 aa). Glu-57 contributes to the Mg(2+) binding site. Residues Asp-61 and Glu-133 contribute to the active site. Glu-133 is a binding site for Mg(2+). The DRBM domain occupies 171 to 240; that stretch reads DAKSRLQEIL…AALAIKKIES (70 aa).

It belongs to the ribonuclease III family. Homodimer. The cofactor is Mg(2+).

It localises to the cytoplasm. The enzyme catalyses Endonucleolytic cleavage to 5'-phosphomonoester.. Digests double-stranded RNA. Involved in the processing of primary rRNA transcript to yield the immediate precursors to the large and small rRNAs (23S and 16S). Processes some mRNAs, and tRNAs when they are encoded in the rRNA operon. Processes pre-crRNA and tracrRNA of type II CRISPR loci if present in the organism. In Desulfotalea psychrophila (strain LSv54 / DSM 12343), this protein is Ribonuclease 3.